The following is a 149-amino-acid chain: SsrA-binding protein (149 aa).

It belongs to the SmpB family.

The protein resides in the cytoplasm. Functionally, required for rescue of stalled ribosomes mediated by trans-translation. Binds to transfer-messenger RNA (tmRNA), required for stable association of tmRNA with ribosomes. tmRNA and SmpB together mimic tRNA shape, replacing the anticodon stem-loop with SmpB. tmRNA is encoded by the ssrA gene; the 2 termini fold to resemble tRNA(Ala) and it encodes a 'tag peptide', a short internal open reading frame. During trans-translation Ala-aminoacylated tmRNA acts like a tRNA, entering the A-site of stalled ribosomes, displacing the stalled mRNA. The ribosome then switches to translate the ORF on the tmRNA; the nascent peptide is terminated with the 'tag peptide' encoded by the tmRNA and targeted for degradation. The ribosome is freed to recommence translation, which seems to be the essential function of trans-translation. This Fervidobacterium nodosum (strain ATCC 35602 / DSM 5306 / Rt17-B1) protein is SsrA-binding protein.